The sequence spans 239 residues: MKISSIDSIFAAWDGSITEARRLQSDMAERIVLKDEPNLLSEPTLLAGFDVGFEDEGRTTRAAAVLMNAGDLRLLETHVVRVPTSMPYVPGLLSFRELPALLQALTQLSRIPALVFVDGHGIAHPRRLGIAAHFGLVTNLPCIGVAKKRLVGDFVEPGTAFGEHTPILLHGTQVGWALRSKMHCKPLIISPGHKVSLHSALTWTQRCLTGYRLPEPTRQADRLASRRGQKIVSDLPSLL.

Asp-50 and Asp-118 together coordinate Mg(2+).

It belongs to the endonuclease V family. It depends on Mg(2+) as a cofactor.

It localises to the cytoplasm. The catalysed reaction is Endonucleolytic cleavage at apurinic or apyrimidinic sites to products with a 5'-phosphate.. DNA repair enzyme involved in the repair of deaminated bases. Selectively cleaves double-stranded DNA at the second phosphodiester bond 3' to a deoxyinosine leaving behind the intact lesion on the nicked DNA. In Xylella fastidiosa (strain Temecula1 / ATCC 700964), this protein is Endonuclease V.